Reading from the N-terminus, the 744-residue chain is Spalt-like protein sem-4 (744 aa).

A disordered region spans residues Ala6–Ser32. Positions Ser13 to Arg22 are enriched in basic residues. 4 C2H2-type zinc fingers span residues Ser99 to His124, Asn305 to His327, Phe333 to His355, and Gln411 to His433. Positions Lys487–Ser497 are enriched in polar residues. 2 disordered regions span residues Lys487–Ile530 and Lys542–Glu562. Residues Val499–Pro509 are compositionally biased toward basic and acidic residues. Low complexity predominate over residues Ser513 to Ser525. The segment covering Gln551–Asn561 has biased composition (polar residues). C2H2-type zinc fingers lie at residues His589 to His611, Phe617 to His639, and Thr701 to His723. The interval Asn725–Ser744 is disordered. Low complexity predominate over residues Ser728 to Ser744.

It belongs to the sal C2H2-type zinc-finger protein family.

It localises to the nucleus. In terms of biological role, transcription factor, involved in positive and negative modulation of transcription. Binds to multiple DNA sequence motifs in the regulatory elements of target genes, including homeobox selector egl-5 and LIM homeobox mec-3. Involved in cell-fate regulation in multiple lineages, including neuronal, mesodermal and vulval. Required to regulate the fate of PLM touch receptor neurons, acting via negative modulation of transcription of egl-5 and mec-3. May modulate gene expression by interacting with different transcription factors during neuronal and mesodermal cell development. Promotes the proliferative sex myoblast (SM) fate, in a cell autonomous manner, acting via the SoxC transcription factor sem-2. Involved in vulval cell-fate determination, acting by regulating expression of homeobox protein lin-39, and may link lin-39 to incoming signaling pathways. Plays a role in detoxification of reactive oxygen species (ROS), by regulating expression of transcription factor skn-1 and the phase II detoxification genes. The sequence is that of Spalt-like protein sem-4 from Caenorhabditis elegans.